Consider the following 414-residue polypeptide: Probable acetyl-CoA acetyltransferase (414 aa).

Cysteine 110 acts as the Acyl-thioester intermediate in catalysis. Residues tyrosine 205, 244 to 246 (KVL), and lysine 249 each bind CoA. Residue tyrosine 205 participates in K(+) binding. K(+) is bound by residues alanine 266 and alanine 268. A CoA-binding site is contributed by serine 269. A K(+)-binding site is contributed by valine 366. Active-site proton acceptor residues include histidine 370 and cysteine 400.

Belongs to the thiolase-like superfamily. Thiolase family.

It catalyses the reaction 2 acetyl-CoA = acetoacetyl-CoA + CoA. This is Probable acetyl-CoA acetyltransferase from Dictyostelium discoideum (Social amoeba).